A 521-amino-acid chain; its full sequence is Replicase polyprotein 1ab (521 aa).

In terms of domain architecture, AV-Nsp11N/CoV-Nsp15M spans 1 to 58 (GGGGQSFLAADNAVLVSTQCYKRHSYVEIPSNLLVQNGMSLKDGANLYVYKRVNGAFV). Residues 75 to 216 (EPRSDVERDF…EDGSIKTCYP (142 aa)) form the NendoU domain. Residues His104, His119, Lys159, Lys263, Asp347, Lys391, and Glu424 contribute to the active site. The Nidovirus-type SAM-dependent 2'-O-MTase domain maps to 219–518 (QSAWTCGYNM…NTSFTSDSFV (300 aa)).

Functionally, the replicase polyprotein of coronaviruses is a multifunctional protein: it contains the activities necessary for the transcription of negative stranded RNA, leader RNA, subgenomic mRNAs and progeny virion RNA as well as proteinases responsible for the cleavage of the polyprotein into functional products. Its function is as follows. NendoU is a Mn(2+)-dependent, uridylate-specific enzyme, which leaves 2'-3'-cyclic phosphates 5' to the cleaved bond. The protein is Replicase polyprotein 1ab (rep) of Gallus gallus (Chicken).